A 390-amino-acid polypeptide reads, in one-letter code: Altered inheritance of mitochondria protein 6 (390 aa).

The signal sequence occupies residues 1–26; the sequence is MLGLKGCLTILIGYVIAVCALFSSRG.

Belongs to the AIM6 family.

The protein is Altered inheritance of mitochondria protein 6 (AIM6) of Saccharomyces cerevisiae (strain RM11-1a) (Baker's yeast).